Reading from the N-terminus, the 176-residue chain is Nucleoside triphosphate/diphosphate phosphatase (176 aa).

Arginine 23 serves as the catalytic Proton donor. Mg(2+) is bound by residues asparagine 87, aspartate 103, aspartate 105, aspartate 107, aspartate 120, and glutamate 123.

It belongs to the Ntdp family. Mg(2+) serves as cofactor.

The enzyme catalyses a ribonucleoside 5'-triphosphate + H2O = a ribonucleoside 5'-diphosphate + phosphate + H(+). It carries out the reaction a ribonucleoside 5'-diphosphate + H2O = a ribonucleoside 5'-phosphate + phosphate + H(+). In terms of biological role, has nucleoside phosphatase activity towards nucleoside triphosphates and nucleoside diphosphates. The chain is Nucleoside triphosphate/diphosphate phosphatase from Bacillus cereus (strain G9842).